The following is a 214-amino-acid chain: Charged multivesicular body protein 2b (214 aa).

Residues 25–55 adopt a coiled-coil conformation; the sequence is QRQIARDRTALEKQEKQLEMEIKKMAKTGNR. The segment at 178 to 199 is disordered; it reads MAHAPSAARKTPSAATAKADGI. Positions 202–212 match the MIT-interacting motif motif; the sequence is EDIERQLKALG.

Belongs to the SNF7 family. As to quaternary structure, probable core component of the endosomal sorting required for transport complex III (ESCRT-III). ESCRT-III components are thought to multimerize to form a flat lattice on the perimeter membrane of the endosome.

The protein resides in the cytoplasm. The protein localises to the cytosol. It is found in the late endosome membrane. Functionally, probable core component of the endosomal sorting required for transport complex III (ESCRT-III) which is involved in multivesicular bodies (MVBs) formation and sorting of endosomal cargo proteins into MVBs. MVBs contain intraluminal vesicles (ILVs) that are generated by invagination and scission from the limiting membrane of the endosome and mostly are delivered to lysosomes enabling degradation of membrane proteins, such as stimulated growth factor receptors, lysosomal enzymes and lipids. The polypeptide is Charged multivesicular body protein 2b (chmp2b) (Danio rerio (Zebrafish)).